The chain runs to 457 residues: MSGTRASNDRPPSAGGVKRGRLQHEAATTGSRVTVVLGAQWGDEGKGKVVDLLATDADIISRCQGGNNAGHTVVVDGKEYDFHLLPSGIINTKAVSFIGNGVVVHLPGLFEEAEKNEKKGLKDWEKRLIISDRAHLVFDFHQAVDGLQEVQRQAQEGKNIGTTRKGIGPAYSSKAARAGLRVCDLLSDFDEFSARFRNLARQHQSMFPTLETDVEGQLKKLKGFAERIRPMVRDGVYFMYEALHGPPKKILVEGANAALLDIGFGTCPFVTSSNCTVGGVCTGLGIPPQNIGEVYGVVKAYTTRVGVGAFPTEQINETGDLLQSRGHEWGVTTGRKRRCGWLDLMILRYAHMINGFTALALTKLDILDTLDEVKVGVSYKLSGKRIPYFPANQEILQKVEVEYETLPGWKTDTTGARKWEDLPPQAQSYIRFVENHVGVAVKWVGVGKSRDSMIQLF.

Positions 1 to 25 (MSGTRASNDRPPSAGGVKRGRLQHE) are disordered. GTP is bound by residues 42–48 (GDEGKGK) and 70–72 (GHT). Aspartate 43 acts as the Proton acceptor in catalysis. Positions 43 and 70 each coordinate Mg(2+). Aspartate 43 contributes to the substrate binding site. IMP contacts are provided by residues 43–46 (DEGK), 68–71 (NAGH), threonine 163, arginine 177, asparagine 256, threonine 271, and arginine 335. The active-site Proton donor is the histidine 71. Position 331-337 (331-337 (VTTGRKR)) interacts with substrate. Residues arginine 337, 363–365 (KLD), and 445–448 (GVGK) contribute to the GTP site.

It belongs to the adenylosuccinate synthetase family. As to quaternary structure, homodimer. Mg(2+) serves as cofactor. In terms of tissue distribution, predominantly expressed in the striated muscle tissues.

Its subcellular location is the cytoplasm. It catalyses the reaction IMP + L-aspartate + GTP = N(6)-(1,2-dicarboxyethyl)-AMP + GDP + phosphate + 2 H(+). Its pathway is purine metabolism; AMP biosynthesis via de novo pathway; AMP from IMP: step 1/2. In terms of biological role, component of the purine nucleotide cycle (PNC), which interconverts IMP and AMP to regulate the nucleotide levels in various tissues, and which contributes to glycolysis and ammoniagenesis. Catalyzes the first committed step in the biosynthesis of AMP from IMP. In Sus scrofa (Pig), this protein is Adenylosuccinate synthetase isozyme 1.